Reading from the N-terminus, the 268-residue chain is Zinc finger protein SNAI2 (268 aa).

Residues 1-20 (MPRSFLVKKHFNASKKPNYS) form an SNAG domain region. The interval 80–117 (SSSLGRVSPPPPSDTSSKDHSGSESPISDEEERLQSKL) is disordered. 4 consecutive C2H2-type zinc fingers follow at residues 128–150 (FQCNLCNKTYSTFSGLAKHKQLH), 159–181 (FSCKYCDKEYVSLGALKMHIRTH), 185–207 (CVCKICGKAFSRPWLLQGHIRTH), and 213–235 (FSCPHCNRAFADRSNLRAHLQTH). The segment at 241–264 (YQCKNCSKTFSRMSLLHKHEESGC) adopts a C2H2-type 5; atypical zinc-finger fold.

The protein belongs to the snail C2H2-type zinc-finger protein family. As to quaternary structure, interacts (via SNAG domain) with LIMD1 (via LIM domains), WTIP (via LIM domains) and AJUBA (via LIM domains). Interacts (via zinc fingers) with KPNA2, KPNB1, and TNPO1. May interact (via zinc fingers) with IPO7. Post-translationally, phosphorylated by GSK3B. Once phosphorylated, it becomes a target for ubiquitination. Ubiquitinated by the SCF(FBXO11) complex; ubiquitination requires previous GSK3B-mediated SNAI2 phosphorylation. Expressed in most adult human tissues, including spleen, thymus, prostate, testis, ovary, small intestine, colon, heart, brain, placenta, lung, liver, skeletal muscle, kidney and pancreas. Not detected in peripheral blood leukocyte. Expressed in the dermis and in all layers of the epidermis, with high levels of expression in the basal layers (at protein level). Expressed in osteoblasts (at protein level). Expressed in mesenchymal stem cells (at protein level). Expressed in breast tumor cells (at protein level).

It localises to the nucleus. The protein localises to the cytoplasm. In terms of biological role, transcriptional repressor that modulates both activator-dependent and basal transcription. Involved in the generation and migration of neural crest cells. Plays a role in mediating RAF1-induced transcriptional repression of the TJ protein, occludin (OCLN) and subsequent oncogenic transformation of epithelial cells. Represses BRCA2 expression by binding to its E2-box-containing silencer and recruiting CTBP1 and HDAC1 in breast cells. In epidermal keratinocytes, binds to the E-box in ITGA3 promoter and represses its transcription. Involved in the regulation of ITGB1 and ITGB4 expression and cell adhesion and proliferation in epidermal keratinocytes. Binds to E-box2 domain of BSG and activates its expression during TGFB1-induced epithelial-mesenchymal transition (EMT) in hepatocytes. Represses E-Cadherin/CDH1 transcription via E-box elements. Involved in osteoblast maturation. Binds to RUNX2 and SOC9 promoters and may act as a positive and negative transcription regulator, respectively, in osteoblasts. Binds to CXCL12 promoter via E-box regions in mesenchymal stem cells and osteoblasts. Plays an essential role in TWIST1-induced EMT and its ability to promote invasion and metastasis. The polypeptide is Zinc finger protein SNAI2 (SNAI2) (Homo sapiens (Human)).